Here is a 438-residue protein sequence, read N- to C-terminus: Na(+)/H(+) antiporter NhaA (438 aa).

11 consecutive transmembrane segments (helical) span residues Phe23–Leu43, Phe62–Leu82, Ser104–Leu124, Gly133–Gly153, Val162–Phe182, Thr185–Leu205, Ser212–Ile232, Phe302–Val322, Leu337–Ile357, Trp372–Ile392, and Ile410–Leu430.

The protein belongs to the NhaA Na(+)/H(+) (TC 2.A.33) antiporter family.

The protein resides in the cell inner membrane. The catalysed reaction is Na(+)(in) + 2 H(+)(out) = Na(+)(out) + 2 H(+)(in). Its function is as follows. Na(+)/H(+) antiporter that extrudes sodium in exchange for external protons. This Helicobacter pylori (strain G27) protein is Na(+)/H(+) antiporter NhaA.